The primary structure comprises 125 residues: Large ribosomal subunit protein bL12 (125 aa).

This sequence belongs to the bacterial ribosomal protein bL12 family. Homodimer. Part of the ribosomal stalk of the 50S ribosomal subunit. Forms a multimeric L10(L12)X complex, where L10 forms an elongated spine to which 2 to 4 L12 dimers bind in a sequential fashion. Binds GTP-bound translation factors.

Its function is as follows. Forms part of the ribosomal stalk which helps the ribosome interact with GTP-bound translation factors. Is thus essential for accurate translation. The chain is Large ribosomal subunit protein bL12 from Hyphomonas neptunium (strain ATCC 15444).